The chain runs to 326 residues: 3-methyl-2-oxobutanoate hydroxymethyltransferase 1 (326 aa).

Aspartate 52, aspartate 91, and glutamate 122 together coordinate Mg(2+). 3-methyl-2-oxobutanoate-binding positions include 52–53 and aspartate 91; that span reads DS. Glutamate 189 functions as the Proton acceptor in the catalytic mechanism.

The protein belongs to the PanB family. As to quaternary structure, homodecamer; pentamer of dimers. Mg(2+) serves as cofactor.

Its subcellular location is the cytoplasm. The catalysed reaction is 3-methyl-2-oxobutanoate + (6R)-5,10-methylene-5,6,7,8-tetrahydrofolate + H2O = 2-dehydropantoate + (6S)-5,6,7,8-tetrahydrofolate. It participates in cofactor biosynthesis; (R)-pantothenate biosynthesis; (R)-pantoate from 3-methyl-2-oxobutanoate: step 1/2. In terms of biological role, catalyzes the reversible reaction in which hydroxymethyl group from 5,10-methylenetetrahydrofolate is transferred onto alpha-ketoisovalerate to form ketopantoate. This chain is 3-methyl-2-oxobutanoate hydroxymethyltransferase 1, found in Bradyrhizobium diazoefficiens (strain JCM 10833 / BCRC 13528 / IAM 13628 / NBRC 14792 / USDA 110).